The sequence spans 493 residues: Trichothecene 8-O-acetyltransferase (493 aa).

Over residues 180–191 the composition is skewed to polar residues; sequence QDQNENEVQQPK. Residues 180 to 199 are disordered; that stretch reads QDQNENEVQQPKNLPDPDEP.

Its pathway is sesquiterpene biosynthesis; trichothecene biosynthesis. In terms of biological role, trichothecene 8-O-acetyltransferase; part of 2-gene cluster involved in trichothecene C-8 modification that mediates the biosynthesis of T2-toxin. The biosynthesis of trichothecenes begins with the cyclization of farnesyl diphosphate to trichodiene and is catalyzed by the trichodiene synthase TRI5. Trichodiene undergoes a series of oxygenations catalyzed by the cytochrome P450 monooxygenase TRI4. TRI4 controls the addition of four oxygens at C-2, C-3, C-11, and the C-12, C-13-epoxide to form the intermediate isotrichotriol. Isotrichotriol then undergoes a non-enzymatic isomerization and cyclization to form isotrichodermol. During this process, the oxygen at the C-2 position becomes the pyran ring oxygen and the hydroxyl group at C-11 is lost. More complex type A trichothecenes are built by modifying isotrichodermol through a series of paired hydroxylation and acetylation or acylation steps. Isotrichodermol is converted to isotrichodermin by the acetyltransferase TRI101. TRI101 encodes a C-3 transacetylase that acts as a self-protection or resistance factor during biosynthesis and that the presence of a free C-3 hydroxyl group is a key component of Fusarium trichothecene phytotoxicity. A second hydroxyl group is added to C-15 by the trichothecene C-15 hydroxylase TRI11, producing 15-decalonectrin, which is then acetylated by TRI3, producing calonectrin. A third hydroxyl group is added at C-4 by the cytochrome P450 monooxygenase TRI13, converting calonectrin to 3,15-diacetoxyspirpenol, which is subsequently acetylated bythe acetyltransferase TRI7. A fourth hydroxyl group is added to C-8 by the cytochrome P450 monooxygenase TRI1, followed by the addition of an isovaleryl moiety by TRI16. Finally, the acetyl group is removed from the C-3 position by the trichothecene C-3 esterase TRI8 to produce T-2 toxin. In Fusarium sporotrichioides, this protein is Trichothecene 8-O-acetyltransferase.